The sequence spans 351 residues: Protein MGF 360-12L (351 aa).

An ANK repeat occupies 57–89; that stretch reads DLNMALVKAVKENNYSLIKLFTEWGANINYGLI.

The protein belongs to the asfivirus MGF 360 family.

Functionally, plays a role in virus cell tropism, and may be required for efficient virus replication in macrophages. The protein is Protein MGF 360-12L of Ornithodoros (relapsing fever ticks).